The sequence spans 87 residues: DNA-directed RNA polymerase subunit omega (87 aa).

It belongs to the RNA polymerase subunit omega family. As to quaternary structure, the RNAP catalytic core consists of 2 alpha, 1 beta, 1 beta' and 1 omega subunit. When a sigma factor is associated with the core the holoenzyme is formed, which can initiate transcription.

It carries out the reaction RNA(n) + a ribonucleoside 5'-triphosphate = RNA(n+1) + diphosphate. Its function is as follows. Promotes RNA polymerase assembly. Latches the N- and C-terminal regions of the beta' subunit thereby facilitating its interaction with the beta and alpha subunits. The protein is DNA-directed RNA polymerase subunit omega of Pseudomonas fluorescens (strain SBW25).